The primary structure comprises 192 residues: Peptidyl-tRNA hydrolase (192 aa).

Tyr-17 is a tRNA binding site. The active-site Proton acceptor is His-22. TRNA contacts are provided by Phe-68, Asn-70, and Asn-116.

It belongs to the PTH family. In terms of assembly, monomer.

It localises to the cytoplasm. It carries out the reaction an N-acyl-L-alpha-aminoacyl-tRNA + H2O = an N-acyl-L-amino acid + a tRNA + H(+). In terms of biological role, hydrolyzes ribosome-free peptidyl-tRNAs (with 1 or more amino acids incorporated), which drop off the ribosome during protein synthesis, or as a result of ribosome stalling. Catalyzes the release of premature peptidyl moieties from peptidyl-tRNA molecules trapped in stalled 50S ribosomal subunits, and thus maintains levels of free tRNAs and 50S ribosomes. The polypeptide is Peptidyl-tRNA hydrolase (Hydrogenovibrio crunogenus (strain DSM 25203 / XCL-2) (Thiomicrospira crunogena)).